The primary structure comprises 398 residues: Phosphoglycerate kinase (398 aa).

Substrate is bound by residues 23–25 (DFN), Arg38, 61–64 (HLGK), Arg122, and Arg155. Residues Lys206, Gly297, Glu328, and 354-357 (GGDS) each bind ATP.

It belongs to the phosphoglycerate kinase family. In terms of assembly, monomer.

It localises to the cytoplasm. It catalyses the reaction (2R)-3-phosphoglycerate + ATP = (2R)-3-phospho-glyceroyl phosphate + ADP. Its pathway is carbohydrate degradation; glycolysis; pyruvate from D-glyceraldehyde 3-phosphate: step 2/5. The polypeptide is Phosphoglycerate kinase (Clostridium novyi (strain NT)).